A 577-amino-acid polypeptide reads, in one-letter code: Proline--tRNA ligase (577 aa).

The protein belongs to the class-II aminoacyl-tRNA synthetase family. ProS type 1 subfamily. In terms of assembly, homodimer.

Its subcellular location is the cytoplasm. It carries out the reaction tRNA(Pro) + L-proline + ATP = L-prolyl-tRNA(Pro) + AMP + diphosphate. In terms of biological role, catalyzes the attachment of proline to tRNA(Pro) in a two-step reaction: proline is first activated by ATP to form Pro-AMP and then transferred to the acceptor end of tRNA(Pro). As ProRS can inadvertently accommodate and process non-cognate amino acids such as alanine and cysteine, to avoid such errors it has two additional distinct editing activities against alanine. One activity is designated as 'pretransfer' editing and involves the tRNA(Pro)-independent hydrolysis of activated Ala-AMP. The other activity is designated 'posttransfer' editing and involves deacylation of mischarged Ala-tRNA(Pro). The misacylated Cys-tRNA(Pro) is not edited by ProRS. This chain is Proline--tRNA ligase, found in Marinobacter nauticus (strain ATCC 700491 / DSM 11845 / VT8) (Marinobacter aquaeolei).